Reading from the N-terminus, the 294-residue chain is Putative maltodextrin utilization protein YvdJ (294 aa).

4 helical membrane-spanning segments follow: residues 35 to 55 (LSFL…VSFV), 184 to 204 (MIMM…TFVL), 228 to 248 (IAIC…MVHF), and 249 to 269 (DLIT…SFAF).

It localises to the cell membrane. In terms of biological role, could have a role in maltodextrin utilization. This is Putative maltodextrin utilization protein YvdJ (yvdJ) from Bacillus subtilis (strain 168).